A 245-amino-acid polypeptide reads, in one-letter code: MSSSELKALLTAPKSVQQAELERINRFLAGLTAQERVLWGLAYLPGNHALSSSFGIQAAVMLHMVSQVQSDIPVILTDTGYLFPETYQFIDQLTERLSLNLKVYQAPITSAWQEARFGQLWEQGVEGLERYNRLNKVEPMQRALAELEVGTWFAGLRRSQSSTREELPILAIHGSRFKLLPIIEWSNKDVHLYLTQFDLPYHPLWEQGYVSVGDTHSSKPLELGMTEEETRFNGLKRECGLHYEI.

The Nucleophile; cysteine thiosulfonate intermediate role is filled by C239.

This sequence belongs to the PAPS reductase family. CysH subfamily.

The protein localises to the cytoplasm. It carries out the reaction [thioredoxin]-disulfide + sulfite + adenosine 3',5'-bisphosphate + 2 H(+) = [thioredoxin]-dithiol + 3'-phosphoadenylyl sulfate. The protein operates within sulfur metabolism; hydrogen sulfide biosynthesis; sulfite from sulfate: step 3/3. Its function is as follows. Catalyzes the formation of sulfite from phosphoadenosine 5'-phosphosulfate (PAPS) using thioredoxin as an electron donor. The protein is Phosphoadenosine 5'-phosphosulfate reductase of Shewanella oneidensis (strain ATCC 700550 / JCM 31522 / CIP 106686 / LMG 19005 / NCIMB 14063 / MR-1).